The sequence spans 361 residues: Ribosomal RNA large subunit methyltransferase M (361 aa).

S-adenosyl-L-methionine is bound by residues S187, 220 to 223, D239, D259, and D276; that span reads CPGG. K305 (proton acceptor) is an active-site residue.

Belongs to the class I-like SAM-binding methyltransferase superfamily. RNA methyltransferase RlmE family. RlmM subfamily. As to quaternary structure, monomer.

It localises to the cytoplasm. The catalysed reaction is cytidine(2498) in 23S rRNA + S-adenosyl-L-methionine = 2'-O-methylcytidine(2498) in 23S rRNA + S-adenosyl-L-homocysteine + H(+). Functionally, catalyzes the 2'-O-methylation at nucleotide C2498 in 23S rRNA. The chain is Ribosomal RNA large subunit methyltransferase M from Shewanella sp. (strain MR-4).